Reading from the N-terminus, the 248-residue chain is 3-deoxy-manno-octulosonate cytidylyltransferase (248 aa).

This sequence belongs to the KdsB family.

Its subcellular location is the cytoplasm. The enzyme catalyses 3-deoxy-alpha-D-manno-oct-2-ulosonate + CTP = CMP-3-deoxy-beta-D-manno-octulosonate + diphosphate. Its pathway is nucleotide-sugar biosynthesis; CMP-3-deoxy-D-manno-octulosonate biosynthesis; CMP-3-deoxy-D-manno-octulosonate from 3-deoxy-D-manno-octulosonate and CTP: step 1/1. It participates in bacterial outer membrane biogenesis; lipopolysaccharide biosynthesis. Its function is as follows. Activates KDO (a required 8-carbon sugar) for incorporation into bacterial lipopolysaccharide in Gram-negative bacteria. The protein is 3-deoxy-manno-octulosonate cytidylyltransferase of Chlorobaculum parvum (strain DSM 263 / NCIMB 8327) (Chlorobium vibrioforme subsp. thiosulfatophilum).